A 468-amino-acid chain; its full sequence is ATP synthase subunit beta (468 aa).

148 to 155 (GGAGVGKT) is a binding site for ATP.

The protein belongs to the ATPase alpha/beta chains family. In terms of assembly, F-type ATPases have 2 components, CF(1) - the catalytic core - and CF(0) - the membrane proton channel. CF(1) has five subunits: alpha(3), beta(3), gamma(1), delta(1), epsilon(1). CF(0) has three main subunits: a(1), b(2) and c(9-12). The alpha and beta chains form an alternating ring which encloses part of the gamma chain. CF(1) is attached to CF(0) by a central stalk formed by the gamma and epsilon chains, while a peripheral stalk is formed by the delta and b chains.

It localises to the cell inner membrane. The enzyme catalyses ATP + H2O + 4 H(+)(in) = ADP + phosphate + 5 H(+)(out). Produces ATP from ADP in the presence of a proton gradient across the membrane. The catalytic sites are hosted primarily by the beta subunits. In Xanthomonas oryzae pv. oryzae (strain KACC10331 / KXO85), this protein is ATP synthase subunit beta.